The primary structure comprises 411 residues: Probable tRNA pseudouridine synthase D (411 aa).

The active-site Nucleophile is the Asp-79. One can recognise a TRUD domain in the interval 150–369 (GFPNYFGQQR…STGDRRIVSA (220 aa)).

This sequence belongs to the pseudouridine synthase TruD family.

It carries out the reaction uridine(13) in tRNA = pseudouridine(13) in tRNA. Could be responsible for synthesis of pseudouridine from uracil-13 in transfer RNAs. The chain is Probable tRNA pseudouridine synthase D from Thermoplasma acidophilum (strain ATCC 25905 / DSM 1728 / JCM 9062 / NBRC 15155 / AMRC-C165).